A 514-amino-acid polypeptide reads, in one-letter code: Putative transposase y4uI (514 aa).

The region spanning 11–93 is the HTH IS408-type domain; that stretch reads VREILKLRLD…PDWSAVAREL (83 aa). Positions 128–317 constitute an Integrase catalytic domain; it reads HGRLPLVMRQ…TRRALFDELD (190 aa).

It belongs to the transposase IS21/IS408/IS1162 family.

The sequence is that of Putative transposase y4uI from Sinorhizobium fredii (strain NBRC 101917 / NGR234).